Here is a 255-residue protein sequence, read N- to C-terminus: Hydroxyacylglutathione hydrolase (255 aa).

7 residues coordinate Zn(2+): histidine 55, histidine 57, aspartate 59, histidine 60, histidine 111, aspartate 131, and histidine 169.

This sequence belongs to the metallo-beta-lactamase superfamily. Glyoxalase II family. Monomer. The cofactor is Zn(2+).

The enzyme catalyses an S-(2-hydroxyacyl)glutathione + H2O = a 2-hydroxy carboxylate + glutathione + H(+). It functions in the pathway secondary metabolite metabolism; methylglyoxal degradation; (R)-lactate from methylglyoxal: step 2/2. Functionally, thiolesterase that catalyzes the hydrolysis of S-D-lactoyl-glutathione to form glutathione and D-lactic acid. The chain is Hydroxyacylglutathione hydrolase from Chromohalobacter salexigens (strain ATCC BAA-138 / DSM 3043 / CIP 106854 / NCIMB 13768 / 1H11).